We begin with the raw amino-acid sequence, 271 residues long: tRNA pseudouridine synthase A (271 aa).

D56 (nucleophile) is an active-site residue. Substrate is bound at residue Y120.

The protein belongs to the tRNA pseudouridine synthase TruA family. As to quaternary structure, homodimer.

The enzyme catalyses uridine(38/39/40) in tRNA = pseudouridine(38/39/40) in tRNA. In terms of biological role, formation of pseudouridine at positions 38, 39 and 40 in the anticodon stem and loop of transfer RNAs. The sequence is that of tRNA pseudouridine synthase A from Janthinobacterium sp. (strain Marseille) (Minibacterium massiliensis).